The sequence spans 100 residues: Urease subunit gamma (100 aa).

This sequence belongs to the urease gamma subunit family. In terms of assembly, heterotrimer of UreA (gamma), UreB (beta) and UreC (alpha) subunits. Three heterotrimers associate to form the active enzyme.

It localises to the cytoplasm. It carries out the reaction urea + 2 H2O + H(+) = hydrogencarbonate + 2 NH4(+). The protein operates within nitrogen metabolism; urea degradation; CO(2) and NH(3) from urea (urease route): step 1/1. The polypeptide is Urease subunit gamma (Staphylococcus xylosus).